We begin with the raw amino-acid sequence, 675 residues long: Myosin-binding protein 3 (675 aa).

A helical transmembrane segment spans residues 17–37; it reads ITVILVYAFLEWLLMFFIFLN. 2 disordered regions span residues 225 to 274 and 286 to 315; these read LRSI…EEET and SKNF…TPTS. Over residues 238 to 251 the composition is skewed to basic and acidic residues; the sequence is AKSRVSEDEQRNDD. The GTD-binding domain occupies 355-453; the sequence is RTIERLRETV…QLQRELEVYR (99 aa). Positions 474–496 are enriched in acidic residues; that stretch reads CEADDDDKEEENREEDNSSEMDV. Disordered stretches follow at residues 474-497, 542-565, and 582-605; these read CEAD…MDVD, DKES…GHGG, and AENE…GSDS. A compositionally biased stretch (basic and acidic residues) spans 596 to 605; the sequence is SDEKNFGSDS. Positions 605–633 form a coiled coil; that stretch reads SEKLEIIKQVDSVYERLQELETDGEFLKN.

Interacts with myosin XI-K.

It is found in the membrane. Its function is as follows. Membrane-anchored myosin receptors that define a distinct, plant-specific transport vesicle compartment. The polypeptide is Myosin-binding protein 3 (Arabidopsis thaliana (Mouse-ear cress)).